The sequence spans 67 residues: Colostrum trypsin inhibitor (67 aa).

Residues 8-58 form the BPTI/Kunitz inhibitor domain; that stretch reads CQLPQARGPCKAALLRYFYNSTSNACEPFTYGGCQGNNBNFETTEMCLRIC. 3 disulfides stabilise this stretch: Cys-8-Cys-58, Cys-17-Cys-41, and Cys-33-Cys-54. N-linked (GlcNAc...) asparagine glycosylation is present at Asn-27.

Its subcellular location is the secreted. The chain is Colostrum trypsin inhibitor from Bos taurus (Bovine).